A 93-amino-acid polypeptide reads, in one-letter code: Integration host factor subunit beta (93 aa).

The protein belongs to the bacterial histone-like protein family. Heterodimer of an alpha and a beta chain.

This protein is one of the two subunits of integration host factor, a specific DNA-binding protein that functions in genetic recombination as well as in transcriptional and translational control. This is Integration host factor subunit beta from Actinobacillus pleuropneumoniae serotype 7 (strain AP76).